We begin with the raw amino-acid sequence, 185 residues long: Threonylcarbamoyl-AMP synthase (185 aa).

In terms of domain architecture, YrdC-like spans 4 to 185 (SFRAQCAARV…LVTGQVIRPA (182 aa)).

The protein belongs to the SUA5 family. TsaC subfamily.

Its subcellular location is the cytoplasm. The enzyme catalyses L-threonine + hydrogencarbonate + ATP = L-threonylcarbamoyladenylate + diphosphate + H2O. Functionally, required for the formation of a threonylcarbamoyl group on adenosine at position 37 (t(6)A37) in tRNAs that read codons beginning with adenine. Catalyzes the conversion of L-threonine, HCO(3)(-)/CO(2) and ATP to give threonylcarbamoyl-AMP (TC-AMP) as the acyladenylate intermediate, with the release of diphosphate. In Pseudomonas aeruginosa (strain UCBPP-PA14), this protein is Threonylcarbamoyl-AMP synthase.